Here is a 292-residue protein sequence, read N- to C-terminus: Shikimate dehydrogenase (NADP(+)) (292 aa).

Shikimate-binding positions include 22-24 (SLS) and Ser69. Lys73 functions as the Proton acceptor in the catalytic mechanism. Positions 94 and 111 each coordinate shikimate. Residues 135–139 (GVGGA) and Ile236 contribute to the NADP(+) site. Tyr238 provides a ligand contact to shikimate. Gly260 serves as a coordination point for NADP(+).

This sequence belongs to the shikimate dehydrogenase family. Homodimer.

It catalyses the reaction shikimate + NADP(+) = 3-dehydroshikimate + NADPH + H(+). It functions in the pathway metabolic intermediate biosynthesis; chorismate biosynthesis; chorismate from D-erythrose 4-phosphate and phosphoenolpyruvate: step 4/7. Functionally, involved in the biosynthesis of the chorismate, which leads to the biosynthesis of aromatic amino acids. Catalyzes the reversible NADPH linked reduction of 3-dehydroshikimate (DHSA) to yield shikimate (SA). The sequence is that of Shikimate dehydrogenase (NADP(+)) from Streptococcus pyogenes serotype M3 (strain ATCC BAA-595 / MGAS315).